A 191-amino-acid polypeptide reads, in one-letter code: Large ribosomal subunit protein uL5 (191 aa).

Belongs to the universal ribosomal protein uL5 family. In terms of assembly, part of the 50S ribosomal subunit; part of the 5S rRNA/L5/L18/L25 subcomplex. Contacts the 5S rRNA and the P site tRNA. Forms a bridge to the 30S subunit in the 70S ribosome.

This is one of the proteins that bind and probably mediate the attachment of the 5S RNA into the large ribosomal subunit, where it forms part of the central protuberance. In the 70S ribosome it contacts protein S13 of the 30S subunit (bridge B1b), connecting the 2 subunits; this bridge is implicated in subunit movement. Contacts the P site tRNA; the 5S rRNA and some of its associated proteins might help stabilize positioning of ribosome-bound tRNAs. The chain is Large ribosomal subunit protein uL5 from Corynebacterium glutamicum (strain R).